The primary structure comprises 188 residues: Adenine phosphoribosyltransferase (188 aa).

This sequence belongs to the purine/pyrimidine phosphoribosyltransferase family. Homodimer.

Its subcellular location is the cytoplasm. The catalysed reaction is AMP + diphosphate = 5-phospho-alpha-D-ribose 1-diphosphate + adenine. Its pathway is purine metabolism; AMP biosynthesis via salvage pathway; AMP from adenine: step 1/1. In terms of biological role, catalyzes a salvage reaction resulting in the formation of AMP, that is energically less costly than de novo synthesis. The protein is Adenine phosphoribosyltransferase of Neisseria meningitidis serogroup B (strain ATCC BAA-335 / MC58).